A 193-amino-acid chain; its full sequence is Glycerol-3-phosphate acyltransferase (193 aa).

5 helical membrane-spanning segments follow: residues A2–V22, Q51–A71, G78–F98, V112–V132, and I154–W174.

This sequence belongs to the PlsY family. Probably interacts with PlsX.

The protein resides in the cell inner membrane. It catalyses the reaction an acyl phosphate + sn-glycerol 3-phosphate = a 1-acyl-sn-glycero-3-phosphate + phosphate. It participates in lipid metabolism; phospholipid metabolism. Catalyzes the transfer of an acyl group from acyl-phosphate (acyl-PO(4)) to glycerol-3-phosphate (G3P) to form lysophosphatidic acid (LPA). This enzyme utilizes acyl-phosphate as fatty acyl donor, but not acyl-CoA or acyl-ACP. This is Glycerol-3-phosphate acyltransferase from Coxiella burnetii (strain CbuG_Q212) (Coxiella burnetii (strain Q212)).